The primary structure comprises 639 residues: Collagen alpha-1(XII) chain (639 aa).

Positions 1-114 constitute a VWFA domain; sequence CRKSLLQAVA…DSLSKIVDDL (114 aa). Fibronectin type-III domains lie at 130–219, 220–310, 311–401, 402–490, 491–585, and 586–639; these read APSN…LPVP, IVSL…LPLP, RPQD…VPAP, TNLR…SPKS, GPRN…TVRN, and LRVY…LRNL. A disordered region spans residues 473-496; it reads DESESDDLTGSERTSPKSGPRNLQ.

The protein belongs to the fibril-associated collagens with interrupted helices (FACIT) family. Trimer of identical chains each containing 190 kDa of non-triple-helical sequences. In terms of processing, the triple-helical tail is stabilized by disulfide bonds at each end. Post-translationally, prolines at the third position of the tripeptide repeating unit (G-X-Y) are hydroxylated in some or all of the chains. O-glycosylated; glycosaminoglycan of chondroitin-sulfate type.

It localises to the secreted. The protein localises to the extracellular space. It is found in the extracellular matrix. In terms of biological role, type XII collagen interacts with type I collagen-containing fibrils, the COL1 domain could be associated with the surface of the fibrils, and the COL2 and NC3 domains may be localized in the perifibrillar matrix. This chain is Collagen alpha-1(XII) chain (COL12A1), found in Oryctolagus cuniculus (Rabbit).